The sequence spans 308 residues: MQEIESLHQSVLLQEVLQAFAPLEEGVLIDCTLGLGGHSKAILSQKPHLKLIGIDKDKFAQEIAKERLKAFEGRYNLLSGGFAKRFKEALEMHDKEIKGVLVDLGVSSLQLDDDSRGFNFHSHALDMRMDLESDLNAQKVINSYPVVALEKIFKDYGEIKEYKKIAHKIAERRAKKPFKDAKDLSDFLSSLSKNKKIHPATLVFQAVRIEVNSELEELKEFLQCARNLKEAILCVISFHSLEDALVKNAFKDYAKNCICDPSSFKCTCSNNHALGEILTKKPITPSPEEIKNNRRSRSAKMRVFQFKP.

S-adenosyl-L-methionine-binding positions include 36 to 38 (GGH), Asp-55, Phe-86, Asp-103, and Gln-110.

This sequence belongs to the methyltransferase superfamily. RsmH family.

Its subcellular location is the cytoplasm. The catalysed reaction is cytidine(1402) in 16S rRNA + S-adenosyl-L-methionine = N(4)-methylcytidine(1402) in 16S rRNA + S-adenosyl-L-homocysteine + H(+). Specifically methylates the N4 position of cytidine in position 1402 (C1402) of 16S rRNA. The polypeptide is Ribosomal RNA small subunit methyltransferase H (Helicobacter pylori (strain Shi470)).